Consider the following 89-residue polypeptide: Small ribosomal subunit protein uS15 (89 aa).

Belongs to the universal ribosomal protein uS15 family. Part of the 30S ribosomal subunit. Forms a bridge to the 50S subunit in the 70S ribosome, contacting the 23S rRNA.

Its function is as follows. One of the primary rRNA binding proteins, it binds directly to 16S rRNA where it helps nucleate assembly of the platform of the 30S subunit by binding and bridging several RNA helices of the 16S rRNA. Forms an intersubunit bridge (bridge B4) with the 23S rRNA of the 50S subunit in the ribosome. This Pediococcus pentosaceus (strain ATCC 25745 / CCUG 21536 / LMG 10740 / 183-1w) protein is Small ribosomal subunit protein uS15.